Here is a 211-residue protein sequence, read N- to C-terminus: Endonuclease III (211 aa).

The region spanning 108 to 127 is the HhH domain; that stretch reads RAALEALPGVGRKTANVVLN. The [4Fe-4S] cluster site is built by cysteine 187, cysteine 194, cysteine 197, and cysteine 203.

This sequence belongs to the Nth/MutY family. [4Fe-4S] cluster serves as cofactor.

It carries out the reaction 2'-deoxyribonucleotide-(2'-deoxyribose 5'-phosphate)-2'-deoxyribonucleotide-DNA = a 3'-end 2'-deoxyribonucleotide-(2,3-dehydro-2,3-deoxyribose 5'-phosphate)-DNA + a 5'-end 5'-phospho-2'-deoxyribonucleoside-DNA + H(+). In terms of biological role, DNA repair enzyme that has both DNA N-glycosylase activity and AP-lyase activity. The DNA N-glycosylase activity releases various damaged pyrimidines from DNA by cleaving the N-glycosidic bond, leaving an AP (apurinic/apyrimidinic) site. The AP-lyase activity cleaves the phosphodiester bond 3' to the AP site by a beta-elimination, leaving a 3'-terminal unsaturated sugar and a product with a terminal 5'-phosphate. This is Endonuclease III from Escherichia coli O6:H1 (strain CFT073 / ATCC 700928 / UPEC).